A 218-amino-acid polypeptide reads, in one-letter code: Small ribosomal subunit protein uS3c (218 aa).

One can recognise a KH type-2 domain in the interval Val47–Ala118.

This sequence belongs to the universal ribosomal protein uS3 family. In terms of assembly, part of the 30S ribosomal subunit.

It is found in the plastid. The protein localises to the chloroplast. The protein is Small ribosomal subunit protein uS3c (rps3) of Amborella trichopoda.